The sequence spans 212 residues: MSEPNLPAGVERREIGGETRLATRGPPVYGEPTADGWRAWDPGRSKLGGMFELGFETGLSGGETVLYLGAASGTTVSHVADFAGPTYAVEFAPRPARDLVEAAEPRDRLFPLLKDARTPKRYAHVVESDVDAIVQDVATRGQAEVAVRNARFLADDGRLLLAIKARSEDVTVEPETVFEGALDRLRETYEILETQRLDRFHEDHLGVVATPK.

Positions 1 to 37 (MSEPNLPAGVERREIGGETRLATRGPPVYGEPTADGW) are disordered. Residues 74-75 (TT), 90-91 (EF), 115-116 (DA), and 136-139 (DVAT) contribute to the S-adenosyl-L-methionine site.

Belongs to the methyltransferase superfamily. Fibrillarin family. As to quaternary structure, interacts with nop5. Component of box C/D small ribonucleoprotein (sRNP) particles that contain rpl7ae, FlpA and nop5, plus a guide RNA.

Involved in pre-rRNA and tRNA processing. Utilizes the methyl donor S-adenosyl-L-methionine to catalyze the site-specific 2'-hydroxyl methylation of ribose moieties in rRNA and tRNA. Site specificity is provided by a guide RNA that base pairs with the substrate. Methylation occurs at a characteristic distance from the sequence involved in base pairing with the guide RNA. This Halorubrum lacusprofundi (strain ATCC 49239 / DSM 5036 / JCM 8891 / ACAM 34) protein is Fibrillarin-like rRNA/tRNA 2'-O-methyltransferase.